We begin with the raw amino-acid sequence, 130 residues long: MRHYEIVFMVHPDQSEQVPGMIERYSATITNAAGTIHRLEDWGRRQLAYPINKLHKAHYVLLNVEAPQEAIDELETNFRFNDAVIRSMVMRVKHAVTEASPMVKAKDERRERHDFASEANDDSEAGDSEE.

Residues Ala-99–Glu-130 are disordered. Residues Lys-104 to Ala-116 show a composition bias toward basic and acidic residues. Residues Ala-119–Glu-130 are compositionally biased toward acidic residues.

The protein belongs to the bacterial ribosomal protein bS6 family.

Its function is as follows. Binds together with bS18 to 16S ribosomal RNA. The sequence is that of Small ribosomal subunit protein bS6 from Yersinia enterocolitica serotype O:8 / biotype 1B (strain NCTC 13174 / 8081).